The sequence spans 114 residues: Hydrogenase maturation factor HypA (114 aa).

A Ni(2+)-binding site is contributed by H2. Positions 73, 76, 89, and 92 each coordinate Zn(2+).

The protein belongs to the HypA/HybF family.

In terms of biological role, involved in the maturation of [NiFe] hydrogenases. Required for nickel insertion into the metal center of the hydrogenase. This Caldanaerobacter subterraneus subsp. tengcongensis (strain DSM 15242 / JCM 11007 / NBRC 100824 / MB4) (Thermoanaerobacter tengcongensis) protein is Hydrogenase maturation factor HypA.